Consider the following 151-residue polypeptide: Large ribosomal subunit protein bL9 (151 aa).

It belongs to the bacterial ribosomal protein bL9 family.

Its function is as follows. Binds to the 23S rRNA. The polypeptide is Large ribosomal subunit protein bL9 (Nitrosospira multiformis (strain ATCC 25196 / NCIMB 11849 / C 71)).